Reading from the N-terminus, the 103-residue chain is Toxin BMLCL (103 aa).

Positions M1–T21 are cleaved as a signal peptide. 5 disulfide bridges follow: C24–C45, C27–C37, C38–C72, C76–C90, and C91–C96.

The protein belongs to the three-finger toxin family. Ancestral subfamily. Orphan group XVII sub-subfamily. As to expression, expressed by the venom gland.

It localises to the secreted. In terms of biological role, interacts with high efficiency with both neuronal alpha-7/CHRNA7 and muscle type nicotinic acetylcholine receptors (nAChRs). Tested on human alpha-7/CHRNA7 nAChR (IC(50)=42 nM), T.californica muscle receptor (IC(50)=31 nM), L.stagnalis and A.californica acetylcholine-binding proteins (IC(50)=333 nM and 3.4 uM, respectively). The chain is Toxin BMLCL from Bungarus multicinctus (Many-banded krait).